The following is a 248-amino-acid chain: 1-(5-phosphoribosyl)-5-[(5-phosphoribosylamino)methylideneamino] imidazole-4-carboxamide isomerase (248 aa).

The active-site Proton acceptor is the aspartate 8. Aspartate 129 serves as the catalytic Proton donor.

It belongs to the HisA/HisF family.

The protein localises to the cytoplasm. The catalysed reaction is 1-(5-phospho-beta-D-ribosyl)-5-[(5-phospho-beta-D-ribosylamino)methylideneamino]imidazole-4-carboxamide = 5-[(5-phospho-1-deoxy-D-ribulos-1-ylimino)methylamino]-1-(5-phospho-beta-D-ribosyl)imidazole-4-carboxamide. It functions in the pathway amino-acid biosynthesis; L-histidine biosynthesis; L-histidine from 5-phospho-alpha-D-ribose 1-diphosphate: step 4/9. This chain is 1-(5-phosphoribosyl)-5-[(5-phosphoribosylamino)methylideneamino] imidazole-4-carboxamide isomerase, found in Rhizobium johnstonii (strain DSM 114642 / LMG 32736 / 3841) (Rhizobium leguminosarum bv. viciae).